We begin with the raw amino-acid sequence, 26 residues long: Peroxidase 1 (26 aa).

Aspartate 15 contacts Ca(2+).

This sequence belongs to the peroxidase family. Classical plant (class III) peroxidase subfamily. Heme b serves as cofactor. Ca(2+) is required as a cofactor.

The protein localises to the secreted. It catalyses the reaction 2 a phenolic donor + H2O2 = 2 a phenolic radical donor + 2 H2O. Removal of H(2)O(2), oxidation of toxic reductants, biosynthesis and degradation of lignin, suberization, auxin catabolism, response to environmental stresses such as wounding, pathogen attack and oxidative stress. These functions might be dependent on each isozyme/isoform in each plant tissue. This chain is Peroxidase 1, found in Vitis vinifera (Grape).